Here is a 451-residue protein sequence, read N- to C-terminus: Phosphoglucosamine mutase (451 aa).

Residue Ser-101 is the Phosphoserine intermediate of the active site. The Mg(2+) site is built by Ser-101, Asp-240, Asp-242, and Asp-244. A Phosphoserine modification is found at Ser-101.

Belongs to the phosphohexose mutase family. Requires Mg(2+) as cofactor. Post-translationally, activated by phosphorylation.

It carries out the reaction alpha-D-glucosamine 1-phosphate = D-glucosamine 6-phosphate. Its function is as follows. Catalyzes the conversion of glucosamine-6-phosphate to glucosamine-1-phosphate. The sequence is that of Phosphoglucosamine mutase from Streptococcus pyogenes serotype M2 (strain MGAS10270).